A 221-amino-acid chain; its full sequence is Large ribosomal subunit protein bL25 (221 aa).

The interval 174–221 (SVVTVVPPTDEPTEEEVEAMEGEAATEEPEVVGEEKEEDSEEENKDEE) is disordered. Residues 184 to 221 (EPTEEEVEAMEGEAATEEPEVVGEEKEEDSEEENKDEE) show a composition bias toward acidic residues.

This sequence belongs to the bacterial ribosomal protein bL25 family. CTC subfamily. As to quaternary structure, part of the 50S ribosomal subunit; part of the 5S rRNA/L5/L18/L25 subcomplex. Contacts the 5S rRNA. Binds to the 5S rRNA independently of L5 and L18.

Its function is as follows. This is one of the proteins that binds to the 5S RNA in the ribosome where it forms part of the central protuberance. This is Large ribosomal subunit protein bL25 from Staphylococcus haemolyticus (strain JCSC1435).